We begin with the raw amino-acid sequence, 324 residues long: MAVPSVMVLPLLIVVFAGVYYVYNEVMRFMSKSVVRNKVVVITDAVSGMGSECARLFHAGGARLVLCGPSWDKLESLYDSLCSGSDPSQTFTPKLVLLDFSDMENISDVVSEICECYGCVDVLICNSSMKVKAPVQNLSLEMDKTIMDVNYFGPITLAKGVLPLMITRRTGQFVLVNSIQGKLALPFRTCYAASKHAVQAFFDCLRAEVEEFGISVSTISHTFINAGAENATPTEATPITATPTKATPTNPIWAYVCSKLNTHGVSPQILAQEIVRSVNRQSREVFLAHPVPTVALYIRALMPGCFFSVVSAGVRDGAMAEQLK.

Residues Met1 to Ala17 form the signal peptide. NAD(+) is bound at residue Val41–Val65. Ser178 contributes to the substrate binding site. Residue Tyr191 is the Proton acceptor of the active site.

Belongs to the short-chain dehydrogenases/reductases (SDR) family.

Its subcellular location is the secreted. Its function is as follows. Putative oxidoreductase. The protein is Dehydrogenase/reductase SDR family member 7C-A (dhrs7ca) of Danio rerio (Zebrafish).